The primary structure comprises 289 residues: 4-diphosphocytidyl-2-C-methyl-D-erythritol kinase (289 aa).

Residue Lys-10 is part of the active site. Residue 95–105 (PVSAGMGGGSA) participates in ATP binding. Asp-137 is a catalytic residue.

The protein belongs to the GHMP kinase family. IspE subfamily.

The enzyme catalyses 4-CDP-2-C-methyl-D-erythritol + ATP = 4-CDP-2-C-methyl-D-erythritol 2-phosphate + ADP + H(+). It functions in the pathway isoprenoid biosynthesis; isopentenyl diphosphate biosynthesis via DXP pathway; isopentenyl diphosphate from 1-deoxy-D-xylulose 5-phosphate: step 3/6. Catalyzes the phosphorylation of the position 2 hydroxy group of 4-diphosphocytidyl-2C-methyl-D-erythritol. This is 4-diphosphocytidyl-2-C-methyl-D-erythritol kinase from Ligilactobacillus salivarius (strain UCC118) (Lactobacillus salivarius).